A 93-amino-acid chain; its full sequence is Allatostatin C (93 aa).

A signal peptide spans 1–23 (MSSVRNIAALALVLLVLAEWSAA). Positions 24–61 (MPTTDKDKERLLNTVDLIDDDGSIETALINYLFTKQIV) are excised as a propeptide. An intrachain disulfide couples cysteine 83 to cysteine 90.

It localises to the secreted. Functionally, inhibits juvenile hormone biosynthesis. The sequence is that of Allatostatin C from Camponotus floridanus (Florida carpenter ant).